A 196-amino-acid chain; its full sequence is Large ribosomal subunit protein uL18 (196 aa).

This sequence belongs to the universal ribosomal protein uL18 family. As to quaternary structure, part of the 50S ribosomal subunit. Contacts the 5S and 23S rRNAs.

Its function is as follows. This is one of the proteins that bind and probably mediate the attachment of the 5S RNA into the large ribosomal subunit, where it forms part of the central protuberance. This chain is Large ribosomal subunit protein uL18, found in Thermofilum pendens (strain DSM 2475 / Hrk 5).